The following is a 389-amino-acid chain: MIRNGRGAAGGAEQPGPGGRRAVRVWCDGCYDMVHYGHSNQLRQARAMGDYLIVGVHTDEEIAKHKGPPVFTQEERYKMVQAIKWVDEVVPAAPYVTTLETLDKYNCDFCVHGNDITLTVDGRDTYEEVKQAGRYRECKRTQGVSTTDLVGRMLLVTKAHHSSQEMSSEYREYADSFGKCPGGRNPWTGVSQFLQTSQKIIQFASGKEPQPGETVIYVAGAFDLFHIGHVDFLEKVHRLAERPYIIAGLHFDQEVNHYKGKNYPIMNLHERTLSVLACRYVSEVVIGAPYAVTAELLSHFKVDLVCHGKTEIIPDRDGSDPYQEPKRRGIFRQIDSGSNLTTDLIVQRIITNRLEYEARNQKKEAKELAFLEAARQQAAQPLGERDGDF.

Positions 1–20 (MIRNGRGAAGGAEQPGPGGR) are disordered. Residues 221 to 222 (AF), 229 to 232 (HVDF), Lys259, 307 to 310 (HGKT), and 336 to 340 (SGSNL) each bind CTP. Ser338 is modified (phosphoserine). Phosphothreonine is present on residues Thr341 and Thr342.

It belongs to the cytidylyltransferase family. Strongest expression in liver, heart, and skeletal muscle.

The catalysed reaction is phosphoethanolamine + CTP + H(+) = CDP-ethanolamine + diphosphate. It functions in the pathway phospholipid metabolism; phosphatidylethanolamine biosynthesis; phosphatidylethanolamine from ethanolamine: step 2/3. Functionally, ethanolamine-phosphate cytidylyltransferase that catalyzes the second step in the synthesis of phosphatidylethanolamine (PE) from ethanolamine via the CDP-ethanolamine pathway. Phosphatidylethanolamine is a dominant inner-leaflet phospholipid in cell membranes, where it plays a role in membrane function by structurally stabilizing membrane-anchored proteins, and participates in important cellular processes such as cell division, cell fusion, blood coagulation, and apoptosis. The protein is Ethanolamine-phosphate cytidylyltransferase (PCYT2) of Homo sapiens (Human).